Here is a 75-residue protein sequence, read N- to C-terminus: UPF0270 protein PSEEN1465 (75 aa).

Belongs to the UPF0270 family.

This Pseudomonas entomophila (strain L48) protein is UPF0270 protein PSEEN1465.